The following is a 297-amino-acid chain: Phosphoribosylaminoimidazole-succinocarboxamide synthase (297 aa).

It belongs to the SAICAR synthetase family.

The enzyme catalyses 5-amino-1-(5-phospho-D-ribosyl)imidazole-4-carboxylate + L-aspartate + ATP = (2S)-2-[5-amino-1-(5-phospho-beta-D-ribosyl)imidazole-4-carboxamido]succinate + ADP + phosphate + 2 H(+). It participates in purine metabolism; IMP biosynthesis via de novo pathway; 5-amino-1-(5-phospho-D-ribosyl)imidazole-4-carboxamide from 5-amino-1-(5-phospho-D-ribosyl)imidazole-4-carboxylate: step 1/2. The chain is Phosphoribosylaminoimidazole-succinocarboxamide synthase from Saccharopolyspora erythraea (strain ATCC 11635 / DSM 40517 / JCM 4748 / NBRC 13426 / NCIMB 8594 / NRRL 2338).